A 147-amino-acid chain; its full sequence is Acidic phospholipase A2 1 (147 aa).

An N-terminal signal peptide occupies residues 1-19; sequence MNPAHLLVLAAVCVSLLGA. Residues 20–27 constitute a propeptide that is removed on maturation; it reads AIVPPQPL. 7 disulfide bridges follow: Cys38–Cys99, Cys54–Cys146, Cys56–Cys72, Cys71–Cys127, Cys78–Cys120, Cys88–Cys113, and Cys106–Cys118. Tyr55, Gly57, and Gly59 together coordinate Ca(2+). The active site involves His75. Ca(2+) is bound at residue Asp76. The active site involves Asp121.

Belongs to the phospholipase A2 family. Group I subfamily. D49 sub-subfamily. Requires Ca(2+) as cofactor. As to expression, expressed by the venom gland.

Its subcellular location is the secreted. The catalysed reaction is a 1,2-diacyl-sn-glycero-3-phosphocholine + H2O = a 1-acyl-sn-glycero-3-phosphocholine + a fatty acid + H(+). PLA2 catalyzes the calcium-dependent hydrolysis of the 2-acyl groups in 3-sn-phosphoglycerides. In Bungarus flaviceps flaviceps (Red-headed krait), this protein is Acidic phospholipase A2 1.